The following is a 231-amino-acid chain: 5'-methylthioadenosine/S-adenosylhomocysteine nucleosidase (231 aa).

E12 (proton acceptor) is an active-site residue. Substrate contacts are provided by residues G78, V153, and 174–175 (ME). D198 acts as the Proton donor in catalysis.

It belongs to the PNP/UDP phosphorylase family. MtnN subfamily.

It carries out the reaction S-adenosyl-L-homocysteine + H2O = S-(5-deoxy-D-ribos-5-yl)-L-homocysteine + adenine. The enzyme catalyses S-methyl-5'-thioadenosine + H2O = 5-(methylsulfanyl)-D-ribose + adenine. It catalyses the reaction 5'-deoxyadenosine + H2O = 5-deoxy-D-ribose + adenine. It participates in amino-acid biosynthesis; L-methionine biosynthesis via salvage pathway; S-methyl-5-thio-alpha-D-ribose 1-phosphate from S-methyl-5'-thioadenosine (hydrolase route): step 1/2. Catalyzes the irreversible cleavage of the glycosidic bond in both 5'-methylthioadenosine (MTA) and S-adenosylhomocysteine (SAH/AdoHcy) to adenine and the corresponding thioribose, 5'-methylthioribose and S-ribosylhomocysteine, respectively. Also cleaves 5'-deoxyadenosine, a toxic by-product of radical S-adenosylmethionine (SAM) enzymes, into 5-deoxyribose and adenine. This is 5'-methylthioadenosine/S-adenosylhomocysteine nucleosidase from Vibrio parahaemolyticus serotype O3:K6 (strain RIMD 2210633).